The following is a 235-amino-acid chain: UPF0758 protein A1S_2918 (235 aa).

Residues 1 to 20 (MNTSIKNWPEQERPRERLLQ) form a disordered region. The span at 9-18 (PEQERPRERL) shows a compositional bias: basic and acidic residues. Positions 105 to 227 (SLHSSHLVLD…SFSFAEQQLL (123 aa)) constitute an MPN domain. 3 residues coordinate Zn(2+): H176, H178, and D189. The short motif at 176–189 (HNHPFGSPQPSPED) is the JAMM motif element.

The protein belongs to the UPF0758 family.

The polypeptide is UPF0758 protein A1S_2918 (Acinetobacter baumannii (strain ATCC 17978 / DSM 105126 / CIP 53.77 / LMG 1025 / NCDC KC755 / 5377)).